The chain runs to 344 residues: Phenylalanine--tRNA ligase alpha subunit (344 aa).

Glu269 is a binding site for Mg(2+).

This sequence belongs to the class-II aminoacyl-tRNA synthetase family. Phe-tRNA synthetase alpha subunit type 1 subfamily. Tetramer of two alpha and two beta subunits. It depends on Mg(2+) as a cofactor.

It localises to the cytoplasm. It carries out the reaction tRNA(Phe) + L-phenylalanine + ATP = L-phenylalanyl-tRNA(Phe) + AMP + diphosphate + H(+). The chain is Phenylalanine--tRNA ligase alpha subunit from Ralstonia nicotianae (strain ATCC BAA-1114 / GMI1000) (Ralstonia solanacearum).